The primary structure comprises 486 residues: ATP synthase subunit beta (486 aa).

Residue G170–T177 participates in ATP binding.

This sequence belongs to the ATPase alpha/beta chains family. As to quaternary structure, F-type ATPases have 2 components, CF(1) - the catalytic core - and CF(0) - the membrane proton channel. CF(1) has five subunits: alpha(3), beta(3), gamma(1), delta(1), epsilon(1). CF(0) has three main subunits: a(1), b(2) and c(9-12). The alpha and beta chains form an alternating ring which encloses part of the gamma chain. CF(1) is attached to CF(0) by a central stalk formed by the gamma and epsilon chains, while a peripheral stalk is formed by the delta and b chains.

It localises to the cell membrane. It carries out the reaction ATP + H2O + 4 H(+)(in) = ADP + phosphate + 5 H(+)(out). Functionally, produces ATP from ADP in the presence of a proton gradient across the membrane. The catalytic sites are hosted primarily by the beta subunits. The protein is ATP synthase subunit beta of Kineococcus radiotolerans (strain ATCC BAA-149 / DSM 14245 / SRS30216).